The following is a 241-amino-acid chain: NAD-dependent protein deacetylase 2 (241 aa).

The Deacetylase sirtuin-type domain maps to 1–241 (MTGKPLVAIL…ALPALLRGLG (241 aa)). NAD(+) contacts are provided by A13, T17, R25, Q92, V94, D95, and H112. Nicotinamide-binding residues include V94 and D95. H112 serves as the catalytic Proton acceptor. Zn(2+) is bound by residues C120, C123, C145, and C148. T186, S187, N211, and I229 together coordinate NAD(+).

The protein belongs to the sirtuin family. Class U subfamily. Requires Zn(2+) as cofactor.

The protein resides in the cytoplasm. The catalysed reaction is N(6)-acetyl-L-lysyl-[protein] + NAD(+) + H2O = 2''-O-acetyl-ADP-D-ribose + nicotinamide + L-lysyl-[protein]. Its function is as follows. NAD-dependent protein deacetylase which modulates the activities of several enzymes which are inactive in their acetylated form. The protein is NAD-dependent protein deacetylase 2 of Streptomyces coelicolor (strain ATCC BAA-471 / A3(2) / M145).